The following is a 1648-amino-acid chain: Cortactin-binding protein 2 (1648 aa).

Disordered stretches follow at residues 1 to 26 (MATD…TAEA), 200 to 250 (EEKK…EEAH), 322 to 439 (PLTV…PGLN), 451 to 476 (GNAN…PTSR), and 492 to 608 (ALSR…PSID). Residues 119–274 (KMQERMSAQL…MEQMKKGSDG (156 aa)) are a coiled coil. Composition is skewed to basic and acidic residues over residues 200-218 (EEKK…EKQR) and 225-250 (QLEK…EEAH). Polar residues-rich tracts occupy residues 330–342 (STGS…NTKG) and 372–392 (LPSS…APDL). The segment covering 393–415 (SNSTPSTPSSTAPAAAQTPGTAP) has biased composition (low complexity). The segment covering 492–503 (ALSRFTSPQAGA) has biased composition (polar residues). Position 495 is an asymmetric dimethylarginine (Arg495). 6 ANK repeats span residues 699-729 (GRPT…DINY), 733-762 (DGHS…RVDA), 766-795 (NGFT…NINH), 799-828 (GGQT…DRSI), 832-861 (DGWT…RAHG), and 901-931 (EGWT…EPER). The disordered stretch occupies residues 1438–1492 (SGAWRKVNTSPRKKPGHFSSPTWNKPDPKREGMRNKTIPHLNTNRNSSLSKQQSL). Over residues 1477 to 1492 (HLNTNRNSSLSKQQSL) the composition is skewed to polar residues. At Ser1510 the chain carries Phosphoserine. A disordered region spans residues 1522-1648 (SMCSSKSESD…KHEQVEKPNK (127 aa)). A compositionally biased stretch (basic and acidic residues) spans 1528–1547 (SESDISKIADSRDDLRKFDS). 2 stretches are compositionally biased toward polar residues: residues 1548–1557 (SRTNPGTSAP) and 1571–1584 (PPSS…SNSK). The segment covering 1609 to 1623 (SQNTKRNSSSSNTRQ) has biased composition (low complexity). The span at 1630 to 1648 (SKEENWTLDKHEQVEKPNK) shows a compositional bias: basic and acidic residues.

As to quaternary structure, interacts with CTTN/cortactin SH3 domain. Interacts with STRN, STRN4/zinedin and MOB4/phocein; this interactions mediate the association with the STRIPAK core complex and may regulate dendritic spine distribution of the STRIPAK complex in hippocampal neurons. Activation of glutamate receptors weakens the interaction with STRN and STRN4. As to expression, isoform 2 is predominantly expressed in brain (at protein level). In the brain, expressed at high levels in hypothalamus and striatum and at lower levels in cerebellum and cortex.

The protein localises to the cytoplasm. It is found in the cell cortex. Its subcellular location is the cell projection. It localises to the dendritic spine. In terms of biological role, regulates the dendritic spine distribution of CTTN/cortactin in hippocampal neurons, and thus controls dendritic spinogenesis and dendritic spine maintenance. Associates with the striatin-interacting phosphatase and kinase (STRIPAK) core complex to regulate dendritic spine distribution of the STRIPAK complex in hippocampal neurons. The protein is Cortactin-binding protein 2 (Cttnbp2) of Mus musculus (Mouse).